The primary structure comprises 431 residues: Keratin, type I cytoskeletal 40 (431 aa).

Positions 1 to 89 (MASDCSPTGC…CEDGVFNSNE (89 aa)) are head. The IF rod domain maps to 89–400 (EKETMQFLND…GLLDSEDSRL (312 aa)). The coil 1A stretch occupies residues 90-124 (KETMQFLNDRLASYLEKVRGLEELNAELECRIREQ). The segment at 125–135 (CEEDVPLVCPD) is linker 1. Residues 136–236 (YQCYFDTIED…HEEEVNVLRG (101 aa)) are coil 1B. Positions 237–252 (QLGDRLSVELDTAPTT) are linker 12. Positions 253–396 (DLNRVLDEMR…NTYQGLLDSE (144 aa)) are coil 2. The interval 397 to 431 (DSRLPCNPCSATSMSNDTCEPCSAYVICTVENSCP) is tail.

Belongs to the intermediate filament family. In terms of assembly, heterotetramer of two type I and two type II keratins.

Functionally, may play a role in late hair differentiation. This is Keratin, type I cytoskeletal 40 (KRT40) from Bos taurus (Bovine).